A 212-amino-acid polypeptide reads, in one-letter code: 3-isopropylmalate dehydratase small subunit 2 (212 aa).

The protein belongs to the LeuD family. LeuD type 1 subfamily. As to quaternary structure, heterodimer of LeuC and LeuD.

The enzyme catalyses (2R,3S)-3-isopropylmalate = (2S)-2-isopropylmalate. Its pathway is amino-acid biosynthesis; L-leucine biosynthesis; L-leucine from 3-methyl-2-oxobutanoate: step 2/4. Functionally, catalyzes the isomerization between 2-isopropylmalate and 3-isopropylmalate, via the formation of 2-isopropylmaleate. The polypeptide is 3-isopropylmalate dehydratase small subunit 2 (Chromobacterium violaceum (strain ATCC 12472 / DSM 30191 / JCM 1249 / CCUG 213 / NBRC 12614 / NCIMB 9131 / NCTC 9757 / MK)).